Consider the following 428-residue polypeptide: Bifunctional IPC transferase and DIPP synthase (428 aa).

Positions 2 to 227 (VETAVILAGG…KAKKYLVKTA (226 aa)) are mobA-like NTP transferase. Residues 8–10 (LAG), K25, E80, and E116 each bind CTP. Residue E116 coordinates Mg(2+). Residues 228-425 (IKGVGDGFIS…LTIYLVWKKK (198 aa)) form a CDP-alcohol phosphatidyltransferases region. The next 3 helical transmembrane spans lie at 266-286 (FLLGMFSALVAYFSPALGGIL), 336-356 (PSWDFMPWVFAALFGSVMVSY), and 389-409 (MIMIFTILGWIKALFVVLAII).

This sequence in the N-terminal section; belongs to the MobA family. In the C-terminal section; belongs to the CDP-alcohol phosphatidyltransferase class-I family. Mg(2+) is required as a cofactor.

The protein resides in the membrane. The catalysed reaction is 1D-myo-inositol 3-phosphate + CTP + H(+) = CDP-1L-myo-inositol + diphosphate. It carries out the reaction CDP-1L-myo-inositol + 1D-myo-inositol 3-phosphate = bis(1L-myo-inositol) 3,1'-phosphate 1-phosphate + CMP + H(+). Functionally, involved in biosynthesis of di-myo-inositol phosphate (DIP), a widespread organic solute in microorganisms adapted to hot environments. Catalyzes the condensation of CTP and L-myo-inositol-1-phosphate into CDP-L-myo-inositol, as well as the biosynthesis of di-myo-inositol-1,3'-phosphate-1'-phosphate (DIPP) from CDP-L-myo-inositol and L-myo-inositol-1-phosphate. In Aquifex aeolicus (strain VF5), this protein is Bifunctional IPC transferase and DIPP synthase (spsI).